Consider the following 462-residue polypeptide: ATP synthase subunit beta (462 aa).

151–158 (GGAGVGKT) is an ATP binding site.

The protein belongs to the ATPase alpha/beta chains family. In terms of assembly, F-type ATPases have 2 components, CF(1) - the catalytic core - and CF(0) - the membrane proton channel. CF(1) has five subunits: alpha(3), beta(3), gamma(1), delta(1), epsilon(1). CF(0) has four main subunits: a(1), b(1), b'(1) and c(9-12).

It localises to the cell inner membrane. It carries out the reaction ATP + H2O + 4 H(+)(in) = ADP + phosphate + 5 H(+)(out). In terms of biological role, produces ATP from ADP in the presence of a proton gradient across the membrane. The catalytic sites are hosted primarily by the beta subunits. The sequence is that of ATP synthase subunit beta from Chlorobium phaeovibrioides (strain DSM 265 / 1930) (Prosthecochloris vibrioformis (strain DSM 265)).